The chain runs to 338 residues: 2-oxoglutarate-dependent dioxygenase ecdG (338 aa).

The Fe2OG dioxygenase domain occupies 165–273 (PSVTNLGFLR…KYTLAYFVRP (109 aa)). Positions 190, 192, and 249 each coordinate Fe cation. A 2-oxoglutarate-binding site is contributed by K264.

It belongs to the iron/ascorbate-dependent oxidoreductase family. Requires Fe(2+) as cofactor.

It participates in antifungal biosynthesis. 2-oxoglutarate-dependent dioxygenase; part of the gene cluster that mediates the biosynthesis of echinocandin B, a fungal lipidated cyclic hexapeptide that acts as an antifungal agent. Linoleoyl-AMP, produced by the fatty-acyl-AMP ligase ecdI, is transferred to the initiation carrier domain (T0) of ecdA. The linoleoyl-S-phosphopantetheinyl-T0 is sequentially extended with L-ornithine, L-threonine, L-proline, L-homotyrosine, L-threonine, and 4R-methyl-L-proline to form the linear hexapeptide. Thereafter, the terminal condensation (C7) performs macrocyclization of the NRPS product and the cyclic scaffold is released from ecdA. All six of the amino acid residues are hydroxylated, including 4R,5R-dihydroxy-L-ornithine, 4R-hydroxyl-L-proline, 3S,4S-dihydroxy-L-homotyrosine, and 3S-hydroxyl-4S-methyl-L-prolin. In the pathway, all the hydroxylation reactions are proposed to occur following completion of the cyclic peptide, so the unhydroxylated precursor produced by ecdA will undergo six rounds of hydroxylation. Five hydroxylase genes (ecdG, ecdH, ecdK, htyE and htyF) are embedded within the echinocandin B (ecd) and L-homotyrosine (hty) clusters. The protein is 2-oxoglutarate-dependent dioxygenase ecdG of Aspergillus rugulosus (Emericella rugulosa).